Reading from the N-terminus, the 399-residue chain is Telomeric repeat-binding factor 2-interacting protein 1 (399 aa).

N-acetylalanine is present on Ala-2. Phosphoserine is present on residues Ser-36 and Ser-43. The region spanning 78-101 is the BRCT domain; that stretch reads FISTQYILDCVERNERLELEAYRL. Positions 104–132 are disordered; it reads ASAADTGSEAKPGALAEGAAEPEPQRHAG. The segment covering 112 to 125 has biased composition (low complexity); sequence EAKPGALAEGAAEP. Lys-114 is covalently cross-linked (Glycyl lysine isopeptide (Lys-Gly) (interchain with G-Cter in SUMO2)). One can recognise a Myb-like domain in the interval 128 to 188; the sequence is QRHAGRIAFT…SLKDRYLKHL (61 aa). Residues Ser-154 and Ser-156 each carry the phosphoserine modification. Lys-194 participates in a covalent cross-link: Glycyl lysine isopeptide (Lys-Gly) (interchain with G-Cter in SUMO2). Disordered stretches follow at residues 196–244 and 264–311; these read LLGD…EEIQ and VVVD…QPEV. A phosphoserine mark is found at Ser-203 and Ser-206. Glycyl lysine isopeptide (Lys-Gly) (interchain with G-Cter in SUMO2) cross-links involve residues Lys-208, Lys-212, and Lys-240. Positions 280–304 are enriched in acidic residues; it reads CDDDPPTPEEDSETQPDEEEEEEEE. Residue Lys-372 forms a Glycyl lysine isopeptide (Lys-Gly) (interchain with G-Cter in SUMO2) linkage. The short motif at 383–399 is the Nuclear localization signal element; it reads KKFGAQNVARRIEFRKK.

The protein belongs to the RAP1 family. In terms of assembly, associates with the I-kappa-B-kinase (IKK) core complex, composed of CHUK, IKBKB and IKBKG. Homodimer. Component of the shelterin complex (telosome) composed of TERF1, TERF2, TINF2, TERF2IP ACD and POT1. Interacts with TERF2; the interaction is direct. Does not interact with TERF1. Interacts with SLX4/BTBD12. As to expression, ubiquitous. Highly expressed.

Its subcellular location is the nucleus. The protein resides in the cytoplasm. It localises to the chromosome. The protein localises to the telomere. Its function is as follows. Acts both as a regulator of telomere function and as a transcription regulator. Involved in the regulation of telomere length and protection as a component of the shelterin complex (telosome). In contrast to other components of the shelterin complex, it is dispensible for telomere capping and does not participate in the protection of telomeres against non-homologous end-joining (NHEJ)-mediated repair. Instead, it is required to negatively regulate telomere recombination and is essential for repressing homology-directed repair (HDR), which can affect telomere length. Does not bind DNA directly: recruited to telomeric double-stranded 5'-TTAGGG-3' repeats via its interaction with TERF2. Independently of its function in telomeres, also acts as a transcription regulator: recruited to extratelomeric 5'-TTAGGG-3' sites via its association with TERF2 or other factors, and regulates gene expression. When cytoplasmic, associates with the I-kappa-B-kinase (IKK) complex and acts as a regulator of the NF-kappa-B signaling by promoting IKK-mediated phosphorylation of RELA/p65, leading to activate expression of NF-kappa-B target genes. This is Telomeric repeat-binding factor 2-interacting protein 1 (TERF2IP) from Homo sapiens (Human).